The following is a 288-amino-acid chain: Bifunctional protein FolD (288 aa).

NADP(+)-binding positions include 166-168 and I232; that span reads GAS.

It belongs to the tetrahydrofolate dehydrogenase/cyclohydrolase family. In terms of assembly, homodimer.

It carries out the reaction (6R)-5,10-methylene-5,6,7,8-tetrahydrofolate + NADP(+) = (6R)-5,10-methenyltetrahydrofolate + NADPH. The catalysed reaction is (6R)-5,10-methenyltetrahydrofolate + H2O = (6R)-10-formyltetrahydrofolate + H(+). The protein operates within one-carbon metabolism; tetrahydrofolate interconversion. Its function is as follows. Catalyzes the oxidation of 5,10-methylenetetrahydrofolate to 5,10-methenyltetrahydrofolate and then the hydrolysis of 5,10-methenyltetrahydrofolate to 10-formyltetrahydrofolate. The sequence is that of Bifunctional protein FolD from Escherichia fergusonii (strain ATCC 35469 / DSM 13698 / CCUG 18766 / IAM 14443 / JCM 21226 / LMG 7866 / NBRC 102419 / NCTC 12128 / CDC 0568-73).